A 754-amino-acid chain; its full sequence is 5-methyltetrahydropteroyltriglutamate--homocysteine methyltransferase (754 aa).

5-methyltetrahydropteroyltri-L-glutamate-binding positions include R15–K18 and K114. L-homocysteine contacts are provided by residues I430–S432 and E483. Residues I430–S432 and E483 contribute to the L-methionine site. Residues R514–C515 and W560 each bind 5-methyltetrahydropteroyltri-L-glutamate. D598 provides a ligand contact to L-homocysteine. D598 is an L-methionine binding site. E604 serves as a coordination point for 5-methyltetrahydropteroyltri-L-glutamate. Zn(2+) contacts are provided by H641, C643, and E665. H694 functions as the Proton donor in the catalytic mechanism. C726 serves as a coordination point for Zn(2+).

Belongs to the vitamin-B12 independent methionine synthase family. Zn(2+) is required as a cofactor.

It catalyses the reaction 5-methyltetrahydropteroyltri-L-glutamate + L-homocysteine = tetrahydropteroyltri-L-glutamate + L-methionine. The protein operates within amino-acid biosynthesis; L-methionine biosynthesis via de novo pathway; L-methionine from L-homocysteine (MetE route): step 1/1. In terms of biological role, catalyzes the transfer of a methyl group from 5-methyltetrahydrofolate to homocysteine resulting in methionine formation. The sequence is that of 5-methyltetrahydropteroyltriglutamate--homocysteine methyltransferase from Campylobacter jejuni subsp. doylei (strain ATCC BAA-1458 / RM4099 / 269.97).